The sequence spans 447 residues: Adenylosuccinate synthetase (447 aa).

GTP is bound by residues 35–41 (GDEGKGK) and 63–65 (GHT). The active-site Proton acceptor is Asp-36. The Mg(2+) site is built by Asp-36 and Gly-63. IMP contacts are provided by residues 36–39 (DEGK), 61–64 (NAGH), Thr-153, Arg-167, Asn-245, Thr-260, and Arg-324. Catalysis depends on His-64, which acts as the Proton donor. 320–326 (VTTKRKR) is a substrate binding site. GTP contacts are provided by residues Arg-326, 352-354 (KLD), and 435-437 (GVG).

The protein belongs to the adenylosuccinate synthetase family. In terms of assembly, homodimer. Mg(2+) serves as cofactor.

It is found in the cytoplasm. The enzyme catalyses IMP + L-aspartate + GTP = N(6)-(1,2-dicarboxyethyl)-AMP + GDP + phosphate + 2 H(+). It participates in purine metabolism; AMP biosynthesis via de novo pathway; AMP from IMP: step 1/2. In terms of biological role, plays an important role in the de novo pathway and in the salvage pathway of purine nucleotide biosynthesis. Catalyzes the first committed step in the biosynthesis of AMP from IMP. Plays a role in the regulation of adult life span. This is Adenylosuccinate synthetase from Drosophila melanogaster (Fruit fly).